Consider the following 480-residue polypeptide: Chromosomal replication initiator protein DnaA (480 aa).

The interval 1-71 (MKEFWQTCVS…EALAAEWYQR (71 aa)) is domain I, interacts with DnaA modulators. The domain II stretch occupies residues 71–142 (RPVQVTFELP…DAANIVYERS (72 aa)). Residues 143-359 (RLNTDLTFEN…GALRKVLAYA (217 aa)) are domain III, AAA+ region. The ATP site is built by G187, G189, K190, and T191. The tract at residues 360 to 480 (RFHGRDVLTV…LHVLEQTLKG (121 aa)) is domain IV, binds dsDNA.

Belongs to the DnaA family. Oligomerizes as a right-handed, spiral filament on DNA at oriC.

Its subcellular location is the cytoplasm. In terms of biological role, plays an essential role in the initiation and regulation of chromosomal replication. ATP-DnaA binds to the origin of replication (oriC) to initiate formation of the DNA replication initiation complex once per cell cycle. Binds the DnaA box (a 9 base pair repeat at the origin) and separates the double-stranded (ds)DNA. Forms a right-handed helical filament on oriC DNA; dsDNA binds to the exterior of the filament while single-stranded (ss)DNA is stabiized in the filament's interior. The ATP-DnaA-oriC complex binds and stabilizes one strand of the AT-rich DNA unwinding element (DUE), permitting loading of DNA polymerase. After initiation quickly degrades to an ADP-DnaA complex that is not apt for DNA replication. Binds acidic phospholipids. This is Chromosomal replication initiator protein DnaA from Bordetella bronchiseptica (strain ATCC BAA-588 / NCTC 13252 / RB50) (Alcaligenes bronchisepticus).